Reading from the N-terminus, the 351-residue chain is Uroporphyrinogen decarboxylase (351 aa).

Residues 25–29, aspartate 74, tyrosine 151, serine 206, and histidine 325 each bind substrate; that span reads RQAGR.

Belongs to the uroporphyrinogen decarboxylase family. As to quaternary structure, homodimer.

The protein localises to the cytoplasm. It carries out the reaction uroporphyrinogen III + 4 H(+) = coproporphyrinogen III + 4 CO2. The protein operates within porphyrin-containing compound metabolism; protoporphyrin-IX biosynthesis; coproporphyrinogen-III from 5-aminolevulinate: step 4/4. Catalyzes the decarboxylation of four acetate groups of uroporphyrinogen-III to yield coproporphyrinogen-III. The polypeptide is Uroporphyrinogen decarboxylase (Chlorobium luteolum (strain DSM 273 / BCRC 81028 / 2530) (Pelodictyon luteolum)).